The sequence spans 364 residues: Esculetin O-methyltransferase (364 aa).

Position 132 (asparagine 132) interacts with bergaptol. S-adenosyl-L-homocysteine is bound by residues glycine 209, aspartate 232, aspartate 252, methionine 253, methionine 265, and lysine 266. Histidine 270 is a binding site for bergaptol. The active-site Proton acceptor is the histidine 270.

It belongs to the class I-like SAM-binding methyltransferase superfamily. Cation-independent O-methyltransferase family. COMT subfamily. In terms of assembly, homodimer. In terms of tissue distribution, expressed ubiquitously.

The enzyme catalyses bergaptol + S-adenosyl-L-methionine = bergapten + S-adenosyl-L-homocysteine. The catalysed reaction is xanthotoxol + S-adenosyl-L-methionine = xanthotoxin + S-adenosyl-L-homocysteine + H(+). It carries out the reaction esculetin + S-adenosyl-L-methionine = isoscopoletin + S-adenosyl-L-homocysteine + H(+). It catalyses the reaction esculetin + S-adenosyl-L-methionine = scopoletin + S-adenosyl-L-homocysteine + H(+). It participates in aromatic compound metabolism. Its pathway is secondary metabolite biosynthesis. Inhibited by zinc Zn(2+), copper Cu(2+) and silver Ag(+) ions. Functionally, O-methyltransferase involved in the biosynthesis of methoxylated coumarins natural products such as isoscopoletin, scopoletin, xanthotoxin and bergapten, photosensitizers used for medical purpose such as treating psoriasis and vitiligo or facilitating resistance to microbial infection and other stresses. Catalyzes the methylation of esculetin, bergaptol and xanthotoxol, but seems inactive on scopoletin and isoscopoletin. The polypeptide is Esculetin O-methyltransferase (Kitagawia praeruptora (Peucedanum praeruptorum)).